A 466-amino-acid chain; its full sequence is Trigger factor (466 aa).

The 80-residue stretch at glycine 166–proline 245 folds into the PPIase FKBP-type domain. Disordered regions lie at residues leucine 313–serine 332 and leucine 424–lysine 466. Over residues aspartate 426 to alanine 444 the composition is skewed to acidic residues. Basic residues predominate over residues proline 453–lysine 466.

It belongs to the FKBP-type PPIase family. Tig subfamily.

It localises to the cytoplasm. It carries out the reaction [protein]-peptidylproline (omega=180) = [protein]-peptidylproline (omega=0). Its function is as follows. Involved in protein export. Acts as a chaperone by maintaining the newly synthesized protein in an open conformation. Functions as a peptidyl-prolyl cis-trans isomerase. The sequence is that of Trigger factor from Leifsonia xyli subsp. xyli (strain CTCB07).